A 56-amino-acid polypeptide reads, in one-letter code: MGHQNIWYSHPRKYGKGSRSCKICGNKHGLIRKYSMNICRQCFREYAKDIGFIKYR.

Residues Cys21, Cys24, Cys39, and Cys42 each coordinate Zn(2+).

This sequence belongs to the universal ribosomal protein uS14 family. Requires Zn(2+) as cofactor.

The chain is Small ribosomal subunit protein uS14 (RPS29) from Griffithsia japonica (Red alga).